The following is a 198-amino-acid chain: ATP-dependent Clp protease proteolytic subunit (198 aa).

Catalysis depends on S98, which acts as the Nucleophile. H123 is an active-site residue.

It belongs to the peptidase S14 family. In terms of assembly, fourteen ClpP subunits assemble into 2 heptameric rings which stack back to back to give a disk-like structure with a central cavity, resembling the structure of eukaryotic proteasomes.

It is found in the cytoplasm. The catalysed reaction is Hydrolysis of proteins to small peptides in the presence of ATP and magnesium. alpha-casein is the usual test substrate. In the absence of ATP, only oligopeptides shorter than five residues are hydrolyzed (such as succinyl-Leu-Tyr-|-NHMec, and Leu-Tyr-Leu-|-Tyr-Trp, in which cleavage of the -Tyr-|-Leu- and -Tyr-|-Trp bonds also occurs).. In terms of biological role, cleaves peptides in various proteins in a process that requires ATP hydrolysis. Has a chymotrypsin-like activity. Plays a major role in the degradation of misfolded proteins. This chain is ATP-dependent Clp protease proteolytic subunit, found in Listeria innocua serovar 6a (strain ATCC BAA-680 / CLIP 11262).